Consider the following 410-residue polypeptide: Probable serine/threonine-protein kinase PBL9 (410 aa).

Gly2 is lipidated: N-myristoyl glycine. A lipid anchor (S-palmitoyl cysteine) is attached at Cys4. Positions Ala11–Glu46 are disordered. In terms of domain architecture, Protein kinase spans Phe68–His352. ATP contacts are provided by residues Leu74 to Val82 and Lys106. Position 151 is a phosphotyrosine (Tyr151). The active-site Proton acceptor is Asp203. Phosphoserine occurs at positions 207 and 237. Thr238 and Thr243 each carry phosphothreonine. Tyr251 is subject to Phosphotyrosine.

This sequence belongs to the protein kinase superfamily. Ser/Thr protein kinase family. In terms of assembly, interacts with the Xanthomonas campestris effector XopAC/AvrAC. As to expression, expressed in stomatal guard cells of leaves.

Its subcellular location is the cell membrane. It carries out the reaction L-seryl-[protein] + ATP = O-phospho-L-seryl-[protein] + ADP + H(+). The catalysed reaction is L-threonyl-[protein] + ATP = O-phospho-L-threonyl-[protein] + ADP + H(+). Its function is as follows. Possible bi-functional kinase. In vitro, it exhibits serine/threonine activity. In vivo, can phosphorylate tyrosine residues of limited substrates. May be involved in plant defense signaling. This Arabidopsis thaliana (Mouse-ear cress) protein is Probable serine/threonine-protein kinase PBL9.